The sequence spans 677 residues: Protein PALS1 (677 aa).

Residues 1–347 (MTTSHMNGYV…AQIKSPPIKE (347 aa)) form a required for the correct localization of PALS1 and PATJ at cell-cell contacts and the normal formation of tight junctions and adherens junctions region. Residues 39–81 (ELGARTLPVRRSAQLEKIRQQQEDRRRREEEGRSRQELDLNSS) are disordered. The span at 51–76 (AQLEKIRQQQEDRRRREEEGRSRQEL) shows a compositional bias: basic and acidic residues. L27 domains lie at 121–178 (ALLE…NRPS) and 180–236 (PYPL…MQLE). Residues 258 to 338 (IVRIEKAKDI…VLSFVLIPSA (81 aa)) enclose the PDZ domain. The SH3 domain occupies 347 to 419 (ETVVHVKAHF…PGKSFQQQRE (73 aa)). One can recognise a Guanylate kinase-like domain in the interval 481-662 (KRPIALIGPP…SYQELLRLIN (182 aa)). 488-495 (GPPNCGQN) serves as a coordination point for ATP. A disordered region spans residues 506–526 (PDRFAGPVPHTTRSRRDAEAN).

This sequence belongs to the MAGUK family. Expressed in the retina and in the neural tube.

It is found in the apical cell membrane. Its subcellular location is the cell junction. The protein localises to the tight junction. In terms of biological role, plays a role in tight junction biogenesis and in the establishment of cell polarity in epithelial cells. Also involved in adherens junction biogenesis. Required for polarized epithelial organization, cell-cell adhesion and remodeling of myocardial cells during heart tube elongation during embryogenesis. Functions in cellular patterning of the retina and development of the retinal pigmented epithelium. Also required for embryo body axis specification. This is Protein PALS1 (pals1a) from Danio rerio (Zebrafish).